The chain runs to 427 residues: 3-phosphoshikimate 1-carboxyvinyltransferase (427 aa).

3-phosphoshikimate is bound by residues K22, S23, and R27. K22 serves as a coordination point for phosphoenolpyruvate. Phosphoenolpyruvate is bound by residues G97 and R125. 7 residues coordinate 3-phosphoshikimate: S171, S172, Q173, S199, D315, N338, and K342. Residue Q173 participates in phosphoenolpyruvate binding. D315 acts as the Proton acceptor in catalysis. Residues R346, R388, and K413 each coordinate phosphoenolpyruvate.

It belongs to the EPSP synthase family. As to quaternary structure, monomer.

It localises to the cytoplasm. The enzyme catalyses 3-phosphoshikimate + phosphoenolpyruvate = 5-O-(1-carboxyvinyl)-3-phosphoshikimate + phosphate. It functions in the pathway metabolic intermediate biosynthesis; chorismate biosynthesis; chorismate from D-erythrose 4-phosphate and phosphoenolpyruvate: step 6/7. Its function is as follows. Catalyzes the transfer of the enolpyruvyl moiety of phosphoenolpyruvate (PEP) to the 5-hydroxyl of shikimate-3-phosphate (S3P) to produce enolpyruvyl shikimate-3-phosphate and inorganic phosphate. The polypeptide is 3-phosphoshikimate 1-carboxyvinyltransferase (Aliivibrio salmonicida (strain LFI1238) (Vibrio salmonicida (strain LFI1238))).